The sequence spans 433 residues: Elongation factor 1-alpha (433 aa).

The tr-type G domain occupies 5 to 227 (KPHLNLVVIG…AFDFFKEPPR (223 aa)). Residues 14–21 (GHIDHGKS) are G1. 14-21 (GHIDHGKS) provides a ligand contact to GTP. Residue S21 coordinates Mg(2+). Positions 70–74 (GITID) are G2. Positions 91–94 (DAPG) are G3. Residues 91–95 (DAPGH) and 153–156 (NKMD) each bind GTP. The G4 stretch occupies residues 153–156 (NKMD). Residues 192–194 (SAW) are G5.

This sequence belongs to the TRAFAC class translation factor GTPase superfamily. Classic translation factor GTPase family. EF-Tu/EF-1A subfamily.

It localises to the cytoplasm. It carries out the reaction GTP + H2O = GDP + phosphate + H(+). In terms of biological role, GTP hydrolase that promotes the GTP-dependent binding of aminoacyl-tRNA to the A-site of ribosomes during protein biosynthesis. In Thermofilum pendens (strain DSM 2475 / Hrk 5), this protein is Elongation factor 1-alpha.